The following is a 128-amino-acid chain: 2-iminobutanoate/2-iminopropanoate deaminase (128 aa).

R105 serves as a coordination point for substrate.

Belongs to the RutC family. As to quaternary structure, homotrimer.

Its subcellular location is the cytoplasm. It catalyses the reaction 2-iminobutanoate + H2O = 2-oxobutanoate + NH4(+). It carries out the reaction 2-iminopropanoate + H2O = pyruvate + NH4(+). It participates in amino-acid biosynthesis; L-isoleucine biosynthesis; 2-oxobutanoate from L-threonine. Accelerates the release of ammonia from reactive enamine/imine intermediates of the PLP-dependent threonine dehydratase (IlvA) in the low water environment of the cell. It catalyzes the deamination of enamine/imine intermediates to yield 2-ketobutyrate and ammonia. It is required for the detoxification of reactive intermediates of IlvA due to their highly nucleophilic abilities and to avoid they are captured by anthranilate phosphoribosyltransferase (TrpD) to generate PRA, an intermediate in the alternative pyrimidine biosynthetic (APB) pathway. Also required for full activity of IlvE which is involved in the isoleucine biosynthesis. RidA also accelerates the release of pyruvate produced by IlvA from L-serine. The protein is 2-iminobutanoate/2-iminopropanoate deaminase of Salmonella typhimurium (strain LT2 / SGSC1412 / ATCC 700720).